We begin with the raw amino-acid sequence, 1903 residues long: Plexin-A4 (1903 aa).

Residues 1–26 form the signal peptide; the sequence is MAFHNRRWNFTFSCCVVVLLLPLVAA. Residues 27 to 515 enclose the Sema domain; sequence RPQQPSAATR…SESQLTRVPV (489 aa). Topologically, residues 27–1246 are extracellular; the sequence is RPQQPSAATR…ITSDSPLSST (1220 aa). 2 cysteine pairs are disulfide-bonded: Cys97–Cys106 and Cys132–Cys140. Asn166 is a glycosylation site (N-linked (GlcNAc...) asparagine). 3 cysteine pairs are disulfide-bonded: Cys291–Cys413, Cys307–Cys364, and Cys382–Cys401. Residue Asn450 is glycosylated (N-linked (GlcNAc...) asparagine). In terms of domain architecture, PSI 1 spans 517–567; that stretch reads ACEQYSSCNECLGSGDPHCGWCVLHSMCTRKEKCERSSEPRRFASNIKQCV. Intrachain disulfides connect Cys518–Cys535, Cys524–Cys566, Cys527–Cys544, and Cys538–Cys550. Asn575 and Asn600 each carry an N-linked (GlcNAc...) asparagine glycan. Cys601 and Cys620 form a disulfide bridge. Asn656, Asn663, Asn764, and Asn772 each carry an N-linked (GlcNAc...) asparagine glycan. Positions 663 to 710 constitute a PSI 2 domain; that stretch reads NCSVHKSCLSCVGSPYQCHWCKYRHTCTHDPSSCSFQEGRVKQPEECP. The PSI 3 domain maps to 811-864; that stretch reads KCDARRESCGLCLKADPLFGCVWCKGENRCSLKQHCSYPQSMWLEHNGINSKCT. 4 IPT/TIG domains span residues 866-960, 962-1046, 1049-1148, and 1151-1246; these read PRIT…YYFV, PQLL…FEYV, PTIT…FVYY, and PVFE…LSST. Asn981, Asn992, Asn1025, Asn1141, Asn1189, and Asn1214 each carry an N-linked (GlcNAc...) asparagine glycan. The helical transmembrane segment at 1247–1267 threads the bilayer; the sequence is AVISIAGAGGLLIFFIVIVLI. Residues 1268–1903 are Cytoplasmic-facing; that stretch reads AYKRKSRESD…QVVAFMSLES (636 aa).

It belongs to the plexin family.

The protein resides in the cell membrane. In terms of biological role, involved in the development of primary sensory neurons especially in branching of the peripheral axons. Interacts with the SLIT2 signaling specifically to promote axonal branching of Rohon-Beard neurons and the trigeminal sensory ganglion neurons. The chain is Plexin-A4 (plxna4) from Danio rerio (Zebrafish).